The following is a 107-amino-acid chain: MTHTHDHEHDHNHEPDYITLVEENGNESLFQILITIDGQEEFGKNYVVLQPTEFEEDEQGLIDVLAYSFTENADGTEGDLQPIPEDAEDEWDMIEEVFNSFMDEQED.

It belongs to the UPF0473 family.

The sequence is that of UPF0473 protein LACR_0139 from Lactococcus lactis subsp. cremoris (strain SK11).